The following is a 132-amino-acid chain: Large ribosomal subunit protein bL17 (132 aa).

The protein belongs to the bacterial ribosomal protein bL17 family. As to quaternary structure, part of the 50S ribosomal subunit. Contacts protein L32.

This chain is Large ribosomal subunit protein bL17, found in Ruthia magnifica subsp. Calyptogena magnifica.